The chain runs to 101 residues: Movement protein (101 aa).

A helical transmembrane segment spans residues 30-50 (EVAILSFVALICFYLLYLWVL). Residues 75–101 (VDRSNPIPNLPAPPSQGNPGPFVPGTG) are disordered.

The protein belongs to the mastrevirus movement protein family. In terms of assembly, interacts with the capsid protein (CP). Part of a MP-CP-viral DNA complex.

It is found in the host membrane. Its function is as follows. Involved in the viral transport within, and between cells. This chain is Movement protein, found in Maize streak virus genotype A (isolate South Africa) (MSV).